The sequence spans 644 residues: Threonine--tRNA ligase (644 aa).

One can recognise a TGS domain in the interval 1–61 (MPVITLPDGS…EKDTKLTIIT (61 aa)). Residues 242–535 (DHRRIGADLD…LIEHYEGKFP (294 aa)) are catalytic. Zn(2+)-binding residues include C335, H386, and H512.

This sequence belongs to the class-II aminoacyl-tRNA synthetase family. Homodimer. Requires Zn(2+) as cofactor.

The protein resides in the cytoplasm. It carries out the reaction tRNA(Thr) + L-threonine + ATP = L-threonyl-tRNA(Thr) + AMP + diphosphate + H(+). Functionally, catalyzes the attachment of threonine to tRNA(Thr) in a two-step reaction: L-threonine is first activated by ATP to form Thr-AMP and then transferred to the acceptor end of tRNA(Thr). Also edits incorrectly charged L-seryl-tRNA(Thr). In Nitrosococcus oceani (strain ATCC 19707 / BCRC 17464 / JCM 30415 / NCIMB 11848 / C-107), this protein is Threonine--tRNA ligase.